A 391-amino-acid chain; its full sequence is Formate-dependent phosphoribosylglycinamide formyltransferase (391 aa).

N(1)-(5-phospho-beta-D-ribosyl)glycinamide-binding positions include 20 to 21 and glutamate 80; that span reads EL. Residues arginine 112, lysine 153, 158-163, 193-196, and glutamate 201 contribute to the ATP site; these read SSGKGQ and EGFV. The 190-residue stretch at 117-306 folds into the ATP-grasp domain; sequence RLAAETLGLP…EFALHVRAIL (190 aa). Glutamate 265 and glutamate 277 together coordinate Mg(2+). Residues aspartate 284, lysine 354, and 361–362 contribute to the N(1)-(5-phospho-beta-D-ribosyl)glycinamide site; that span reads RR.

Belongs to the PurK/PurT family. As to quaternary structure, homodimer.

It carries out the reaction N(1)-(5-phospho-beta-D-ribosyl)glycinamide + formate + ATP = N(2)-formyl-N(1)-(5-phospho-beta-D-ribosyl)glycinamide + ADP + phosphate + H(+). The protein operates within purine metabolism; IMP biosynthesis via de novo pathway; N(2)-formyl-N(1)-(5-phospho-D-ribosyl)glycinamide from N(1)-(5-phospho-D-ribosyl)glycinamide (formate route): step 1/1. Its function is as follows. Involved in the de novo purine biosynthesis. Catalyzes the transfer of formate to 5-phospho-ribosyl-glycinamide (GAR), producing 5-phospho-ribosyl-N-formylglycinamide (FGAR). Formate is provided by PurU via hydrolysis of 10-formyl-tetrahydrofolate. In Shewanella sp. (strain W3-18-1), this protein is Formate-dependent phosphoribosylglycinamide formyltransferase.